We begin with the raw amino-acid sequence, 403 residues long: MSHRKFSAPRHGSLGFLPRKRSSRHRGKVKSFPKDDPSKPVHLTAFLGYKAGMTHIVREVDRPGSKVNKKEVVEAVTIVETPPMVVVGIVGYVETPRGLRTFKTVFAEHISDECKRRFYKNWHKSKKKAFTKYCKKWQDDTGKKQLEKDFNSMKKYCQVIRIIAHTQMRLLPLRQKKAHLMEIQVNGGTVAEKLDWARERLEQQVPVNQVFGQDEMIDVIGVTKGKGYKGVTSRWHTKKLPRKTHRGLRKVACIGAWHPARVAFSVARAGQKGYHHRTEINKKIYKIGQGYLIKDGKLIKNNASTDYDLSDKSINPLGGFVHYGEVTNDFIMLKGCVVGTKKRVLTLRKSLLVQTKRRALEKIDLKFIDTTSKFGHGRFQTMEEKKAFMGPLKKDRIAKEEGA.

The tract at residues 1–37 (MSHRKFSAPRHGSLGFLPRKRSSRHRGKVKSFPKDDP) is disordered. At S13 the chain carries Phosphoserine. The segment covering 18–31 (PRKRSSRHRGKVKS) has biased composition (basic residues). K39 participates in a covalent cross-link: Glycyl lysine isopeptide (Lys-Gly) (interchain with G-Cter in SUMO2). The residue at position 136 (K136) is an N6-acetyllysine. Glycyl lysine isopeptide (Lys-Gly) (interchain with G-Cter in SUMO2) cross-links involve residues K224 and K226. Tele-methylhistidine is present on H245. K286 and K294 each carry N6-acetyllysine; alternate. A Glycyl lysine isopeptide (Lys-Gly) (interchain with G-Cter in SUMO2); alternate cross-link involves residue K286. K294 is covalently cross-linked (Glycyl lysine isopeptide (Lys-Gly) (interchain with G-Cter in SUMO1); alternate). S304 bears the Phosphoserine mark. Residue K366 is modified to N6-acetyllysine; alternate. K366 is covalently cross-linked (Glycyl lysine isopeptide (Lys-Gly) (interchain with G-Cter in SUMO2); alternate). Position 373 is an N6-acetyllysine (K373). Residues K386, K393, and K399 each participate in a glycyl lysine isopeptide (Lys-Gly) (interchain with G-Cter in SUMO2) cross-link.

It belongs to the universal ribosomal protein uL3 family. In terms of assembly, component of the large ribosomal subunit. Interacts with DHX33. In terms of processing, constitutively monomethylated at His-245 by METTL18. Methylation at His-245 regulates translation elongation by slowing ribosome traversal on tyrosine codons: slower elongation provides enough time for proper folding of synthesized proteins and prevents cellular aggregation of tyrosine-rich proteins. It is not required for incorporation of RPL3 into ribosomes.

Its subcellular location is the nucleus. It localises to the nucleolus. The protein resides in the cytoplasm. In terms of biological role, component of the large ribosomal subunit. The ribosome is a large ribonucleoprotein complex responsible for the synthesis of proteins in the cell. This chain is Large ribosomal subunit protein uL3 (Rpl3), found in Rattus norvegicus (Rat).